The chain runs to 695 residues: Protein-glutamine gamma-glutamyltransferase 2 (695 aa).

Active-site residues include Cys-272, His-332, and Asp-355. Asn-395, Asp-397, Glu-434, Glu-444, and Glu-449 together coordinate Ca(2+). GTP is bound by residues 476–482 (SIKHAQP) and 578–581 (ANIP).

It belongs to the transglutaminase superfamily. Transglutaminase family. Monomer. It depends on Ca(2+) as a cofactor.

It localises to the cytoplasm. The protein resides in the cytosol. The protein localises to the nucleus. Its subcellular location is the chromosome. It is found in the secreted. It localises to the extracellular space. The protein resides in the extracellular matrix. The protein localises to the cell membrane. Its subcellular location is the mitochondrion. It catalyses the reaction L-glutaminyl-[protein] + L-lysyl-[protein] = [protein]-L-lysyl-N(6)-5-L-glutamyl-[protein] + NH4(+). It carries out the reaction L-glutaminyl-[protein] + serotonin = 5-serotonyl-L-glutamyl-[protein] + NH4(+). The enzyme catalyses L-glutaminyl-[protein] + dopamine = 5-dopaminyl-L-glutamyl-[protein] + NH4(+). The catalysed reaction is L-glutaminyl-[protein] + histamine = 5-histaminyl-L-glutamyl-[protein] + NH4(+). It catalyses the reaction L-glutaminyl-[protein] + (R)-noradrenaline = 5-(R)-noradrenalinyl-L-glutamyl-[protein] + NH4(+). It carries out the reaction L-glutaminyl-[protein] + H2O = L-glutamyl-[protein] + NH4(+). Acyltransferase activity is regulated by the binding of GTP and Ca(2+): inactivated by GTP, which stabilizes its closed structure, thereby obstructing the accessibility of substrates to the active sites. In contrast, Ca(2+) acts as a cofactor by inducing conformational change to the active open form. In absence of Ca(2+), Mg(2+) may bind Ca(2+)-binding sites, promoting GTP-binding and subsequent inhibition of the acyltransferase activity. Its function is as follows. Calcium-dependent acyltransferase that catalyzes the formation of covalent bonds between peptide-bound glutamine and various primary amines, such as gamma-amino group of peptide-bound lysine, or mono- and polyamines, thereby producing cross-linked or aminated proteins, respectively. Involved in many biological processes, such as bone development, angiogenesis, wound healing, cellular differentiation, chromatin modification and apoptosis. Acts as a protein-glutamine gamma-glutamyltransferase by mediating the cross-linking of proteins: under physiological conditions, the protein cross-linking activity is inhibited by GTP; inhibition is relieved by Ca(2+) in response to various stresses. When secreted, catalyzes cross-linking of proteins of the extracellular matrix, resulting in the formation of scaffolds. Plays a key role during apoptosis, both by (1) promoting the cross-linking of cytoskeletal proteins resulting in condensation of the cytoplasm, and by (2) mediating cross-linking proteins of the extracellular matrix, resulting in the irreversible formation of scaffolds that stabilize the integrity of the dying cells before their clearance by phagocytosis, thereby preventing the leakage of harmful intracellular components. In addition to protein cross-linking, can use different monoamine substrates to catalyze a vast array of protein post-translational modifications: mediates aminylation of serotonin, dopamine, noradrenaline or histamine into glutamine residues of target proteins to generate protein serotonylation, dopaminylation, noradrenalinylation or histaminylation, respectively. Mediates protein serotonylation of small GTPases during activation and aggregation of platelets, leading to constitutive activation of these GTPases. Plays a key role in chromatin organization by mediating serotonylation and dopaminylation of histone H3. Catalyzes serotonylation of 'Gln-5' of histone H3 (H3Q5ser) during serotonergic neuron differentiation, thereby facilitating transcription. Acts as a mediator of neurotransmission-independent role of nuclear dopamine in ventral tegmental area (VTA) neurons: catalyzes dopaminylation of 'Gln-5' of histone H3 (H3Q5dop), thereby regulating relapse-related transcriptional plasticity in the reward system. Also acts as a protein deamidase by mediating the side chain deamidation of specific glutamine residues of proteins to glutamate. May also act as an isopeptidase cleaving the previously formed cross-links. Also able to participate in signaling pathways independently of its acyltransferase activity: acts as a signal transducer in alpha-1 adrenergic receptor-mediated stimulation of phospholipase C-delta (PLCD) activity and is required for coupling alpha-1 adrenergic agonists to the stimulation of phosphoinositide lipid metabolism. The sequence is that of Protein-glutamine gamma-glutamyltransferase 2 from Pagrus major (Red sea bream).